We begin with the raw amino-acid sequence, 430 residues long: MSAIVDVYAREVLDSRGNPTVEVEVYTEDGGFGRALVPSGASTGEYEAVELRDGDKSRYLGKGVLKAVENVNEIIAPAIIGFEVTDQVGIDKTLIELDGTENKSKLGANAILGVSLAVARAAADELDMPLYQYLGGFNAKTLPVPMMNILNGGAHADNNVDIQEFMIMPVGAKSFREALRMGAEIFHSLKAVLKEKGYNTAVGDEGGFAPNLKSNEEALQTIIEAIEKAGYKPGEEVMLAMDVASSELYNKEDGKYHLEGEGVVKTSEEMVAWYEELVSKYPIISIEDGLDENDWEGHKLLTERLGKKVQLVGDDLFVTNTKKLAEGIEKGVGNSILIKVNQIGTLTETFDAIEMAKRAGYTAVVSHRSGETEDSTIADIAVATNAGQIKTGAPSRTDRVAKYNQLLRIEDQLGDTAIYNGIKSFYNLKK.

Gln-163 is a (2R)-2-phosphoglycerate binding site. Glu-205 acts as the Proton donor in catalysis. Mg(2+) is bound by residues Asp-242, Glu-287, and Asp-314. (2R)-2-phosphoglycerate contacts are provided by Lys-339, Arg-368, Ser-369, and Lys-390. Lys-339 acts as the Proton acceptor in catalysis.

Belongs to the enolase family. Mg(2+) serves as cofactor.

The protein localises to the cytoplasm. The protein resides in the secreted. Its subcellular location is the cell surface. It carries out the reaction (2R)-2-phosphoglycerate = phosphoenolpyruvate + H2O. It participates in carbohydrate degradation; glycolysis; pyruvate from D-glyceraldehyde 3-phosphate: step 4/5. Catalyzes the reversible conversion of 2-phosphoglycerate (2-PG) into phosphoenolpyruvate (PEP). It is essential for the degradation of carbohydrates via glycolysis. This is Enolase from Geobacillus sp. (strain WCH70).